The sequence spans 579 residues: Arginine--tRNA ligase (579 aa).

A 'HIGH' region motif is present at residues 127-137 (ANPTGPLHVGH).

The protein belongs to the class-I aminoacyl-tRNA synthetase family. As to quaternary structure, monomer.

Its subcellular location is the cytoplasm. It catalyses the reaction tRNA(Arg) + L-arginine + ATP = L-arginyl-tRNA(Arg) + AMP + diphosphate. The sequence is that of Arginine--tRNA ligase from Acidithiobacillus ferrooxidans (strain ATCC 23270 / DSM 14882 / CIP 104768 / NCIMB 8455) (Ferrobacillus ferrooxidans (strain ATCC 23270)).